Here is a 673-residue protein sequence, read N- to C-terminus: Acetoacetyl-CoA synthetase (673 aa).

It belongs to the ATP-dependent AMP-binding enzyme family.

The protein localises to the cytoplasm. It localises to the cytosol. The enzyme catalyses acetoacetate + ATP + CoA = acetoacetyl-CoA + AMP + diphosphate. In terms of biological role, converts acetoacetate to acetoacetyl-CoA in the cytosol. Ketone body-utilizing enzyme, responsible for the synthesis of cholesterol and fatty acids. The protein is Acetoacetyl-CoA synthetase (aacs) of Danio rerio (Zebrafish).